The following is a 180-amino-acid chain: Probable Brix domain-containing ribosomal biogenesis protein (180 aa).

The region spanning 1–178 is the Brix domain; the sequence is MTTSRRPSPR…KPAEMVKRGR (178 aa).

In terms of biological role, probably involved in the biogenesis of the ribosome. The chain is Probable Brix domain-containing ribosomal biogenesis protein from Aeropyrum pernix (strain ATCC 700893 / DSM 11879 / JCM 9820 / NBRC 100138 / K1).